A 343-amino-acid chain; its full sequence is N-acetyl-gamma-glutamyl-phosphate reductase (343 aa).

Cys-147 is an active-site residue.

This sequence belongs to the NAGSA dehydrogenase family. Type 1 subfamily.

The protein resides in the cytoplasm. It carries out the reaction N-acetyl-L-glutamate 5-semialdehyde + phosphate + NADP(+) = N-acetyl-L-glutamyl 5-phosphate + NADPH + H(+). It participates in amino-acid biosynthesis; L-arginine biosynthesis; N(2)-acetyl-L-ornithine from L-glutamate: step 3/4. Functionally, catalyzes the NADPH-dependent reduction of N-acetyl-5-glutamyl phosphate to yield N-acetyl-L-glutamate 5-semialdehyde. The protein is N-acetyl-gamma-glutamyl-phosphate reductase of Staphylococcus aureus (strain Mu3 / ATCC 700698).